A 348-amino-acid chain; its full sequence is Phosphoribosylformylglycinamidine cyclo-ligase (348 aa).

It belongs to the AIR synthase family.

It is found in the cytoplasm. The catalysed reaction is 2-formamido-N(1)-(5-O-phospho-beta-D-ribosyl)acetamidine + ATP = 5-amino-1-(5-phospho-beta-D-ribosyl)imidazole + ADP + phosphate + H(+). The protein operates within purine metabolism; IMP biosynthesis via de novo pathway; 5-amino-1-(5-phospho-D-ribosyl)imidazole from N(2)-formyl-N(1)-(5-phospho-D-ribosyl)glycinamide: step 2/2. This chain is Phosphoribosylformylglycinamidine cyclo-ligase, found in Sorangium cellulosum (strain So ce56) (Polyangium cellulosum (strain So ce56)).